The following is a 301-amino-acid chain: GTPase Era (301 aa).

One can recognise an Era-type G domain in the interval 7-175 (YCGFIAIVGR…AAIVRKHLPE (169 aa)). The segment at 15 to 22 (GRPNVGKS) is G1. A GTP-binding site is contributed by 15-22 (GRPNVGKS). The tract at residues 41–45 (QTTRH) is G2. A G3 region spans residues 62–65 (DTPG). Residues 62-66 (DTPGL) and 124-127 (NKVD) each bind GTP. Residues 124-127 (NKVD) form a G4 region. The G5 stretch occupies residues 154-156 (ISA). The KH type-2 domain maps to 206–283 (LGAELPYSVT…HLELWVKVKS (78 aa)).

This sequence belongs to the TRAFAC class TrmE-Era-EngA-EngB-Septin-like GTPase superfamily. Era GTPase family. Monomer.

The protein localises to the cytoplasm. The protein resides in the cell inner membrane. Its function is as follows. An essential GTPase that binds both GDP and GTP, with rapid nucleotide exchange. Plays a role in 16S rRNA processing and 30S ribosomal subunit biogenesis and possibly also in cell cycle regulation and energy metabolism. This Shigella flexneri protein is GTPase Era.